The primary structure comprises 1064 residues: Carbamoyl phosphate synthase large chain (1064 aa).

Residues 1–401 (MPKRNDIKKI…SLLKAVRSLE (401 aa)) form a carboxyphosphate synthetic domain region. Arginine 129, arginine 169, glycine 175, glycine 176, glutamate 208, isoleucine 210, glutamate 215, glycine 241, valine 242, histidine 243, glutamine 284, and glutamate 298 together coordinate ATP. In terms of domain architecture, ATP-grasp 1 spans 133–327 (KELCESINEP…IAKMSAKIAI (195 aa)). Mg(2+) is bound by residues glutamine 284, glutamate 298, and asparagine 300. Positions 284, 298, and 300 each coordinate Mn(2+). The segment at 402-546 (IGVFHNEMTE…YSTYEWENES (145 aa)) is oligomerization domain. The tract at residues 547-929 (KRSDKEKIIV…ALYKSFEAAK (383 aa)) is carbamoyl phosphate synthetic domain. One can recognise an ATP-grasp 2 domain in the interval 671–861 (EKALQDLDIP…MAQLATQMIL (191 aa)). 10 residues coordinate ATP: arginine 707, serine 746, leucine 748, glutamate 752, glycine 777, valine 778, histidine 779, serine 780, glutamine 820, and glutamate 832. 3 residues coordinate Mg(2+): glutamine 820, glutamate 832, and asparagine 834. Positions 820, 832, and 834 each coordinate Mn(2+). The MGS-like domain maps to 930–1064 (LHMADYGSVL…QSRSFTTKNI (135 aa)). The interval 930-1064 (LHMADYGSVL…QSRSFTTKNI (135 aa)) is allosteric domain.

The protein belongs to the CarB family. As to quaternary structure, composed of two chains; the small (or glutamine) chain promotes the hydrolysis of glutamine to ammonia, which is used by the large (or ammonia) chain to synthesize carbamoyl phosphate. Tetramer of heterodimers (alpha,beta)4. Mg(2+) is required as a cofactor. Requires Mn(2+) as cofactor.

It catalyses the reaction hydrogencarbonate + L-glutamine + 2 ATP + H2O = carbamoyl phosphate + L-glutamate + 2 ADP + phosphate + 2 H(+). It carries out the reaction hydrogencarbonate + NH4(+) + 2 ATP = carbamoyl phosphate + 2 ADP + phosphate + 2 H(+). The protein operates within amino-acid biosynthesis; L-arginine biosynthesis; carbamoyl phosphate from bicarbonate: step 1/1. Its pathway is pyrimidine metabolism; UMP biosynthesis via de novo pathway; (S)-dihydroorotate from bicarbonate: step 1/3. In terms of biological role, large subunit of the glutamine-dependent carbamoyl phosphate synthetase (CPSase). CPSase catalyzes the formation of carbamoyl phosphate from the ammonia moiety of glutamine, carbonate, and phosphate donated by ATP, constituting the first step of 2 biosynthetic pathways, one leading to arginine and/or urea and the other to pyrimidine nucleotides. The large subunit (synthetase) binds the substrates ammonia (free or transferred from glutamine from the small subunit), hydrogencarbonate and ATP and carries out an ATP-coupled ligase reaction, activating hydrogencarbonate by forming carboxy phosphate which reacts with ammonia to form carbamoyl phosphate. The polypeptide is Carbamoyl phosphate synthase large chain (Lactococcus lactis subsp. cremoris (strain SK11)).